The primary structure comprises 137 residues: Holo-[acyl-carrier-protein] synthase (137 aa).

Mg(2+)-binding residues include D8 and E57.

It belongs to the P-Pant transferase superfamily. AcpS family. It depends on Mg(2+) as a cofactor.

The protein resides in the cytoplasm. It carries out the reaction apo-[ACP] + CoA = holo-[ACP] + adenosine 3',5'-bisphosphate + H(+). Functionally, transfers the 4'-phosphopantetheine moiety from coenzyme A to a Ser of acyl-carrier-protein. The sequence is that of Holo-[acyl-carrier-protein] synthase from Hyphomonas neptunium (strain ATCC 15444).